Reading from the N-terminus, the 311-residue chain is GTP cyclohydrolase FolE2 (311 aa).

Belongs to the GTP cyclohydrolase IV family.

The enzyme catalyses GTP + H2O = 7,8-dihydroneopterin 3'-triphosphate + formate + H(+). It participates in cofactor biosynthesis; 7,8-dihydroneopterin triphosphate biosynthesis; 7,8-dihydroneopterin triphosphate from GTP: step 1/1. In terms of biological role, converts GTP to 7,8-dihydroneopterin triphosphate. In Hydrogenovibrio crunogenus (strain DSM 25203 / XCL-2) (Thiomicrospira crunogena), this protein is GTP cyclohydrolase FolE2.